The sequence spans 347 residues: NADH-ubiquinone oxidoreductase chain 2 (347 aa).

The next 11 helical transmembrane spans lie at 3-23 (PLIF…VMTT), 25-45 (HWVM…PILM), 59-79 (YFLT…INLT), 96-116 (IIMT…FWVP), 122-142 (VQLS…MSIL), 149-169 (INLD…GWGG), 178-198 (ILAY…VYNP), 201-221 (ALLN…MLMV), 237-257 (MPLL…LPPL), 274-294 (DSMI…YFYM), and 326-346 (LSPL…LALL).

The protein belongs to the complex I subunit 2 family. Core subunit of respiratory chain NADH dehydrogenase (Complex I) which is composed of 45 different subunits. Interacts with TMEM242.

It localises to the mitochondrion inner membrane. It carries out the reaction a ubiquinone + NADH + 5 H(+)(in) = a ubiquinol + NAD(+) + 4 H(+)(out). Its function is as follows. Core subunit of the mitochondrial membrane respiratory chain NADH dehydrogenase (Complex I) which catalyzes electron transfer from NADH through the respiratory chain, using ubiquinone as an electron acceptor. Essential for the catalytic activity and assembly of complex I. This is NADH-ubiquinone oxidoreductase chain 2 from Nyctimene aello (Broad-striped tube-nosed fruit bat).